The sequence spans 234 residues: MVIGGDECDINEHRFLVAFFNTTGFFCGGTLINPEWVVTAAHCDSTNFQMQLGVHSKKVLNEDEQTRNPKEKFICPNKNNNEVLDKDIMLIKLDKPISNSKHIAPLSLPSSPPSVGSVCRIMGWGSITPVKETFPDVPYCANINLLDHAVCQTGYPSCWRNTTLCAGFLEGGKDTCGGDSGGPLICNGQFQGIVSYGAHSCGQGPKPGIYTNVFDYTDWIQRNIAGNTDATCPP.

Met-1 is a propeptide. The Peptidase S1 domain occupies 2–225 (VIGGDECDIN…YTDWIQRNIA (224 aa)). 6 disulfides stabilise this stretch: Cys-8–Cys-140, Cys-27–Cys-43, Cys-75–Cys-232, Cys-119–Cys-186, Cys-151–Cys-165, and Cys-176–Cys-201. Residue Asn-21 is glycosylated (N-linked (GlcNAc...) asparagine). Active-site charge relay system residues include His-42 and Asp-87. Catalysis depends on Ser-180, which acts as the Charge relay system.

It belongs to the peptidase S1 family. Snake venom subfamily. Monomer. Expressed by the venom gland.

Its subcellular location is the secreted. Functionally, thrombin-like snake venom serine protease. Has arginyl esterase and fibrinogen clotting activities. In Deinagkistrodon acutus (Hundred-pace snake), this protein is Thrombin-like enzyme acutin.